The chain runs to 91 residues: Small ribosomal subunit protein uS19 (91 aa).

It belongs to the universal ribosomal protein uS19 family.

Functionally, protein S19 forms a complex with S13 that binds strongly to the 16S ribosomal RNA. The protein is Small ribosomal subunit protein uS19 of Lactobacillus delbrueckii subsp. bulgaricus (strain ATCC 11842 / DSM 20081 / BCRC 10696 / JCM 1002 / NBRC 13953 / NCIMB 11778 / NCTC 12712 / WDCM 00102 / Lb 14).